The primary structure comprises 424 residues: NADH-quinone oxidoreductase subunit H (424 aa).

9 helical membrane-spanning segments follow: residues 11 to 31 (LVVAKAIAIFVFLMLTVLVAI), 79 to 99 (FVYFVAPIISVIPAFTAFAFI), 119 to 139 (LPVAVLFILGLSAIGVYGIVL), 160 to 180 (VISYEVAMGLSFAAVFLYAGS), 193 to 213 (VWYIFLLLPSFVIYLISMVGE), 255 to 275 (VSALAATLFLGGWHAPWPLNL), 283 to 303 (WWPVLWFTAKVWGFLFMYFWL), 317 to 337 (ALGWKLLIPVSLVWVLIAAVI), and 347 to 367 (YWTPALVVSSIVVAAILVMSL). Residues 376-424 (AVTKARRRGKQPAAGPDEQGALEPLFPTPPLPMKPLAQPVGASKENARG) are disordered.

This sequence belongs to the complex I subunit 1 family. NDH-1 is composed of 14 different subunits. Subunits NuoA, H, J, K, L, M, N constitute the membrane sector of the complex.

It is found in the cell membrane. It carries out the reaction a quinone + NADH + 5 H(+)(in) = a quinol + NAD(+) + 4 H(+)(out). In terms of biological role, NDH-1 shuttles electrons from NADH, via FMN and iron-sulfur (Fe-S) centers, to quinones in the respiratory chain. The immediate electron acceptor for the enzyme in this species is believed to be menaquinone. Couples the redox reaction to proton translocation (for every two electrons transferred, four hydrogen ions are translocated across the cytoplasmic membrane), and thus conserves the redox energy in a proton gradient. This subunit may bind ubiquinone. The sequence is that of NADH-quinone oxidoreductase subunit H from Mycobacterium ulcerans (strain Agy99).